The following is a 274-amino-acid chain: Large ribosomal subunit protein uL2cz/uL2cy (274 aa).

Disordered stretches follow at residues Met1–Gln21 and Asn224–Lys274.

This sequence belongs to the universal ribosomal protein uL2 family. In terms of assembly, part of the 50S ribosomal subunit.

Its subcellular location is the plastid. It localises to the chloroplast. The chain is Large ribosomal subunit protein uL2cz/uL2cy (rpl2-A) from Populus trichocarpa (Western balsam poplar).